The following is a 156-amino-acid chain: MARRRRAEVRQLQPDLVYGDVLVTAFINKIMRDGKKNLAARIFYDACKIIQEKTGQEPLKVFKQAVENVKPRMEVRSRRVGGANYQVPMEVSPRRQQSLALRWLVQAANQRPERRAAVRIAHELMDAAEGKGGAVKKKEDVERMAEANRAYAHYRW.

Part of the 30S ribosomal subunit. Contacts proteins S9 and S11. Binds to the C-terminus of IF3 and to the C-terminus of Era.

One of the primary rRNA binding proteins, it binds directly to 3'-end of the 16S rRNA where it nucleates assembly of the head domain of the 30S subunit. Is located at the subunit interface close to the decoding center. Binds mRNA and the E site tRNA blocking its exit path in the ribosome. This blockage implies that this section of the ribosome must be able to move to release the deacetylated tRNA. The protein is Small ribosomal subunit protein uS7 (rpsG) of Thermus thermophilus (strain ATCC 27634 / DSM 579 / HB8).